The primary structure comprises 145 residues: 3-hydroxyacyl-[acyl-carrier-protein] dehydratase FabZ (145 aa).

Histidine 51 is a catalytic residue.

This sequence belongs to the thioester dehydratase family. FabZ subfamily.

The protein localises to the cytoplasm. The catalysed reaction is a (3R)-hydroxyacyl-[ACP] = a (2E)-enoyl-[ACP] + H2O. In terms of biological role, involved in unsaturated fatty acids biosynthesis. Catalyzes the dehydration of short chain beta-hydroxyacyl-ACPs and long chain saturated and unsaturated beta-hydroxyacyl-ACPs. The protein is 3-hydroxyacyl-[acyl-carrier-protein] dehydratase FabZ of Staphylococcus saprophyticus subsp. saprophyticus (strain ATCC 15305 / DSM 20229 / NCIMB 8711 / NCTC 7292 / S-41).